The primary structure comprises 365 residues: Fructose-1,6-bisphosphatase class 1 2 (365 aa).

4 residues coordinate Mg(2+): E100, D122, L124, and D125. Residues 125-128 (DGSS) and N221 each bind substrate. E293 contributes to the Mg(2+) binding site.

This sequence belongs to the FBPase class 1 family. In terms of assembly, homotetramer. Mg(2+) is required as a cofactor.

The protein localises to the cytoplasm. The enzyme catalyses beta-D-fructose 1,6-bisphosphate + H2O = beta-D-fructose 6-phosphate + phosphate. It functions in the pathway carbohydrate biosynthesis; gluconeogenesis. In Leptothrix cholodnii (strain ATCC 51168 / LMG 8142 / SP-6) (Leptothrix discophora (strain SP-6)), this protein is Fructose-1,6-bisphosphatase class 1 2.